We begin with the raw amino-acid sequence, 34 residues long: MSDIN-like toxin proprotein 3 (34 aa).

Residues 1–10 (MSDINTARLP) constitute a propeptide that is removed on maturation. Residues 11-20 (FFQPPEFRPP) constitute a cross-link (cyclopeptide (Phe-Pro)). The propeptide occupies 21–34 (CVGDDIEMVLTRGE).

It belongs to the MSDIN fungal toxin family. Post-translationally, processed by the macrocyclase-peptidase enzyme POPB to yield a toxic cyclic decapeptide. POPB first removes 10 residues from the N-terminus. Conformational trapping of the remaining peptide forces the enzyme to release this intermediate rather than proceed to macrocyclization. The enzyme rebinds the remaining peptide in a different conformation and catalyzes macrocyclization of the N-terminal 10 residues.

Functionally, probable toxin that belongs to the MSDIN-like toxin family responsible for a large number of food poisoning cases and deaths. The polypeptide is MSDIN-like toxin proprotein 3 (Amanita bisporigera (Destroying angel)).